A 152-amino-acid polypeptide reads, in one-letter code: Transcriptional repressor NrdR (152 aa).

A zinc finger lies at 3–34; that stretch reads CPFCNHGELKVIDSRNAPEANAIKRRRECLKC. An ATP-cone domain is found at 48–138; that stretch reads LQVLKRDGRY…VYRRFKDVGE (91 aa).

Belongs to the NrdR family. It depends on Zn(2+) as a cofactor.

Its function is as follows. Negatively regulates transcription of bacterial ribonucleotide reductase nrd genes and operons by binding to NrdR-boxes. The chain is Transcriptional repressor NrdR from Chlamydia pneumoniae (Chlamydophila pneumoniae).